Here is a 404-residue protein sequence, read N- to C-terminus: S-adenosylmethionine synthase (404 aa).

Residue histidine 17 coordinates ATP. Aspartate 19 is a Mg(2+) binding site. Position 45 (glutamate 45) interacts with K(+). The L-methionine site is built by glutamate 58 and glutamine 101. Residues 101 to 111 (QSPDINRGVDR) form a flexible loop region. ATP is bound by residues 172–174 (DAK), 245–246 (RF), aspartate 254, 260–261 (RK), alanine 277, and lysine 281. Position 254 (aspartate 254) interacts with L-methionine. Lysine 285 provides a ligand contact to L-methionine.

Belongs to the AdoMet synthase family. As to quaternary structure, homotetramer; dimer of dimers. The cofactor is Mg(2+). It depends on K(+) as a cofactor.

It localises to the cytoplasm. The catalysed reaction is L-methionine + ATP + H2O = S-adenosyl-L-methionine + phosphate + diphosphate. It functions in the pathway amino-acid biosynthesis; S-adenosyl-L-methionine biosynthesis; S-adenosyl-L-methionine from L-methionine: step 1/1. Functionally, catalyzes the formation of S-adenosylmethionine (AdoMet) from methionine and ATP. The overall synthetic reaction is composed of two sequential steps, AdoMet formation and the subsequent tripolyphosphate hydrolysis which occurs prior to release of AdoMet from the enzyme. The protein is S-adenosylmethionine synthase of Pelodictyon phaeoclathratiforme (strain DSM 5477 / BU-1).